A 341-amino-acid chain; its full sequence is Endolytic peptidoglycan transglycosylase RlpA (341 aa).

The signal sequence occupies residues 1 to 26; the sequence is MSKRVRSSLILPAVCGLGLAAVLLSS. Residue C27 is the site of N-palmitoyl cysteine attachment. C27 carries S-diacylglycerol cysteine lipidation. Residues 260-341 enclose the SPOR domain; that stretch reads SLPADGLYLQ…LGQPTLVRPD (82 aa).

This sequence belongs to the RlpA family.

It localises to the cell membrane. Lytic transglycosylase with a strong preference for naked glycan strands that lack stem peptides. Required for efficient separation of daughter cells and maintenance of rod shape. The protein is Endolytic peptidoglycan transglycosylase RlpA of Pseudomonas aeruginosa (strain UCBPP-PA14).